The sequence spans 318 residues: ATP-dependent (S)-NAD(P)H-hydrate dehydratase (318 aa).

One can recognise a YjeF C-terminal domain in the interval 3-313 (AREVFKRVIP…KEIGPAFDSL (311 aa)). Residues Gly119 and 172–178 (NTNEFKR) each bind (6S)-NADPHX. ATP-binding positions include 210-214 (KGSKD) and 229-238 (TSLRRCGGQG). Asp239 serves as a coordination point for (6S)-NADPHX.

This sequence belongs to the NnrD/CARKD family. Mg(2+) is required as a cofactor.

The protein localises to the cytoplasm. It catalyses the reaction (6S)-NADHX + ATP = ADP + phosphate + NADH + H(+). It carries out the reaction (6S)-NADPHX + ATP = ADP + phosphate + NADPH + H(+). In terms of biological role, catalyzes the dehydration of the S-form of NAD(P)HX at the expense of ATP, which is converted to ADP. Together with NAD(P)HX epimerase, which catalyzes the epimerization of the S- and R-forms, the enzyme allows the repair of both epimers of NAD(P)HX, a damaged form of NAD(P)H that is a result of enzymatic or heat-dependent hydration. The polypeptide is ATP-dependent (S)-NAD(P)H-hydrate dehydratase (Batrachochytrium dendrobatidis (strain JAM81 / FGSC 10211) (Frog chytrid fungus)).